Consider the following 605-residue polypeptide: Cystathionine gamma-synthase-like enzyme iboG1 (605 aa).

A substrate-binding site is contributed by Y289. K393 bears the N6-(pyridoxal phosphate)lysine mark.

It belongs to the trans-sulfuration enzymes family. Pyridoxal 5'-phosphate is required as a cofactor.

It participates in secondary metabolite biosynthesis. Cystathionine gamma-synthase-like enzyme; part of the gene cluster that mediates the biosynthesis of the psychoactive metabolites ibotenic acid and muscimol. The first committed step is glutamate hydroxylation by the 2-oxoglutarate-dependent dioxygenase iboH, and the last step is decarboxylation of ibotenic acid to muscimol by the decarboxylase iboD. The order of the intermediate reactions is somewhat ambiguous. IboA likely activates the carboxylic acid at position 5 to introduce an amide bond, and the flavin monooxygenase iboF generates the N-O bond. There are several options for the latter step. One option is that iboF directly hydroxylates the amide nitrogen formed by iboA to produce a hydroxamic acid species. Another option is that iboF hydroxylates an external N-containing compound, whose resulting N-O bond is subsequently introduced into the hydroxyglutamate scaffold. The paralogous PLP-dependent cystathionine gamma-synthase-like enzymes iboG1 and iboG2 are likely involved in substitution of the OH group at position 3 by the O-N moiety. The first cyclic intermediate is most probably tricholomic acid which is likely desaturated to ibotenic acid by the cytochrome P450 monooxygenase iboC. The sequence is that of Cystathionine gamma-synthase-like enzyme iboG1 (iboG1) from Amanita muscaria (strain Koide BX008).